The primary structure comprises 294 residues: Protoheme IX farnesyltransferase (294 aa).

9 consecutive transmembrane segments (helical) span residues 22 to 42 (VTQLAVFCAVIGMFLATPELP), 46 to 66 (IVVAATIGIWLLAGAAFAINC), 89 to 109 (ITVPQTLVFSGLIGGAGMWVL), 116 to 136 (LTMWLTFATFVGYAVIYTIIL), 143 to 163 (NIVIGGLSGAMPPALGWAAVA), 170 to 190 (AWILVLIIFIWTPPHFWALAL), 212 to 232 (FTQFHIWLYTIALVATTMLPF), 234 to 254 (VGMSGLIYLVSVAILDIIFVW), and 272 to 292 (FAYSIIYLSLLFAALLVDHYL).

It belongs to the UbiA prenyltransferase family. Protoheme IX farnesyltransferase subfamily.

The protein localises to the cell inner membrane. The enzyme catalyses heme b + (2E,6E)-farnesyl diphosphate + H2O = Fe(II)-heme o + diphosphate. Its pathway is porphyrin-containing compound metabolism; heme O biosynthesis; heme O from protoheme: step 1/1. Converts heme B (protoheme IX) to heme O by substitution of the vinyl group on carbon 2 of heme B porphyrin ring with a hydroxyethyl farnesyl side group. The polypeptide is Protoheme IX farnesyltransferase (Janthinobacterium sp. (strain Marseille) (Minibacterium massiliensis)).